Consider the following 196-residue polypeptide: Nitrogen regulatory protein P-II homolog (196 aa).

The N-terminal 61 residues, 1–61 (MAASMTKPIS…NNSRVLPVVS (61 aa)), are a transit peptide targeting the chloroplast. ATP-binding positions include 108 to 112 (GFGAQ) and 161 to 164 (GDGK). Glycine 110 is a binding site for Mg(2+).

Belongs to the P(II) protein family. Homodimer. Interacts with NAGK. Interaction with NAGK is dependent of MgATP and inhibited by 2-oxoglutarate, arginine, glutamate, citrate, and oxaloacetate.

The protein localises to the plastid. The protein resides in the chloroplast. Participates in sensing carbon and organic nitrogen status and regulates some steps of primary carbon and nitrogen metabolism. Required for nitrite uptake in chloroplasts and regulates arginine biosynthesis through interaction with acetylglutamate kinase (NAGK) in chloroplasts. Regulates fatty acids synthesis in chloroplasts by interacting with the acetyl-CoA carboxylase complex and inhibiting acetyl-CoA carboxylase (ACCase) activity. The protein is Nitrogen regulatory protein P-II homolog (GLB1) of Arabidopsis thaliana (Mouse-ear cress).